A 178-amino-acid chain; its full sequence is Large ribosomal subunit protein uL16 (178 aa).

It belongs to the universal ribosomal protein uL16 family.

The sequence is that of Large ribosomal subunit protein uL16 from Pyrobaculum calidifontis (strain DSM 21063 / JCM 11548 / VA1).